The primary structure comprises 182 residues: Crossover junction endodeoxyribonuclease RuvC (182 aa).

Catalysis depends on residues aspartate 7, glutamate 68, and aspartate 141. Residues aspartate 7, glutamate 68, and aspartate 141 each coordinate Mg(2+).

Belongs to the RuvC family. As to quaternary structure, homodimer which binds Holliday junction (HJ) DNA. The HJ becomes 2-fold symmetrical on binding to RuvC with unstacked arms; it has a different conformation from HJ DNA in complex with RuvA. In the full resolvosome a probable DNA-RuvA(4)-RuvB(12)-RuvC(2) complex forms which resolves the HJ. Mg(2+) serves as cofactor.

It is found in the cytoplasm. It carries out the reaction Endonucleolytic cleavage at a junction such as a reciprocal single-stranded crossover between two homologous DNA duplexes (Holliday junction).. In terms of biological role, the RuvA-RuvB-RuvC complex processes Holliday junction (HJ) DNA during genetic recombination and DNA repair. Endonuclease that resolves HJ intermediates. Cleaves cruciform DNA by making single-stranded nicks across the HJ at symmetrical positions within the homologous arms, yielding a 5'-phosphate and a 3'-hydroxyl group; requires a central core of homology in the junction. The consensus cleavage sequence is 5'-(A/T)TT(C/G)-3'. Cleavage occurs on the 3'-side of the TT dinucleotide at the point of strand exchange. HJ branch migration catalyzed by RuvA-RuvB allows RuvC to scan DNA until it finds its consensus sequence, where it cleaves and resolves the cruciform DNA. The polypeptide is Crossover junction endodeoxyribonuclease RuvC (Thermobifida fusca (strain YX)).